Reading from the N-terminus, the 490-residue chain is Glutamate--tRNA ligase (490 aa).

A 'HIGH' region motif is present at residues 9 to 19 (PSPTGLQHIGG). The 'KMSKS' region motif lies at 251–255 (KLSKR). K254 contributes to the ATP binding site.

Belongs to the class-I aminoacyl-tRNA synthetase family. Glutamate--tRNA ligase type 1 subfamily. As to quaternary structure, monomer.

It is found in the cytoplasm. The catalysed reaction is tRNA(Glu) + L-glutamate + ATP = L-glutamyl-tRNA(Glu) + AMP + diphosphate. Functionally, catalyzes the attachment of glutamate to tRNA(Glu) in a two-step reaction: glutamate is first activated by ATP to form Glu-AMP and then transferred to the acceptor end of tRNA(Glu). The protein is Glutamate--tRNA ligase of Borreliella burgdorferi (strain ATCC 35210 / DSM 4680 / CIP 102532 / B31) (Borrelia burgdorferi).